The following is a 356-amino-acid chain: Holliday junction branch migration complex subunit RuvB (356 aa).

The large ATPase domain (RuvB-L) stretch occupies residues 13–201 (SSNLSRKTRL…FGITQRLNFY (189 aa)). Residues 15–35 (NLSRKTRLLDPTPSLEEGKVR) are disordered. Residues Leu-40, Arg-41, Gly-82, Lys-85, Thr-86, Thr-87, 148-150 (EDF), Arg-191, Tyr-201, and Arg-238 each bind ATP. Thr-86 is a binding site for Mg(2+). Residues 202-273 (SISDLNRIIQ…LVDKSLTLHQ (72 aa)) form a small ATPAse domain (RuvB-S) region. Residues 276–356 (ECGLDQSDRR…NSCKNSPIIK (81 aa)) form a head domain (RuvB-H) region. 2 residues coordinate DNA: Arg-331 and Arg-336.

The protein belongs to the RuvB family. Homohexamer. Forms an RuvA(8)-RuvB(12)-Holliday junction (HJ) complex. HJ DNA is sandwiched between 2 RuvA tetramers; dsDNA enters through RuvA and exits via RuvB. An RuvB hexamer assembles on each DNA strand where it exits the tetramer. Each RuvB hexamer is contacted by two RuvA subunits (via domain III) on 2 adjacent RuvB subunits; this complex drives branch migration. In the full resolvosome a probable DNA-RuvA(4)-RuvB(12)-RuvC(2) complex forms which resolves the HJ.

Its subcellular location is the cytoplasm. The enzyme catalyses ATP + H2O = ADP + phosphate + H(+). The RuvA-RuvB-RuvC complex processes Holliday junction (HJ) DNA during genetic recombination and DNA repair, while the RuvA-RuvB complex plays an important role in the rescue of blocked DNA replication forks via replication fork reversal (RFR). RuvA specifically binds to HJ cruciform DNA, conferring on it an open structure. The RuvB hexamer acts as an ATP-dependent pump, pulling dsDNA into and through the RuvAB complex. RuvB forms 2 homohexamers on either side of HJ DNA bound by 1 or 2 RuvA tetramers; 4 subunits per hexamer contact DNA at a time. Coordinated motions by a converter formed by DNA-disengaged RuvB subunits stimulates ATP hydrolysis and nucleotide exchange. Immobilization of the converter enables RuvB to convert the ATP-contained energy into a lever motion, pulling 2 nucleotides of DNA out of the RuvA tetramer per ATP hydrolyzed, thus driving DNA branch migration. The RuvB motors rotate together with the DNA substrate, which together with the progressing nucleotide cycle form the mechanistic basis for DNA recombination by continuous HJ branch migration. Branch migration allows RuvC to scan DNA until it finds its consensus sequence, where it cleaves and resolves cruciform DNA. The sequence is that of Holliday junction branch migration complex subunit RuvB from Prochlorococcus marinus (strain SARG / CCMP1375 / SS120).